We begin with the raw amino-acid sequence, 207 residues long: 2,3-bisphosphoglycerate-dependent phosphoglycerate mutase (207 aa).

Residues Arg10–Asn17, Thr23–Gly24, Arg62, Glu89–Tyr92, Lys100, Arg116–Arg117, and Gly160–Asn161 contribute to the substrate site. The active-site Tele-phosphohistidine intermediate is His11. Residue Glu89 is the Proton donor/acceptor of the active site.

This sequence belongs to the phosphoglycerate mutase family. BPG-dependent PGAM subfamily. Homodimer.

It catalyses the reaction (2R)-2-phosphoglycerate = (2R)-3-phosphoglycerate. The protein operates within carbohydrate degradation; glycolysis; pyruvate from D-glyceraldehyde 3-phosphate: step 3/5. Its function is as follows. Catalyzes the interconversion of 2-phosphoglycerate and 3-phosphoglycerate. This is 2,3-bisphosphoglycerate-dependent phosphoglycerate mutase from Nitrobacter winogradskyi (strain ATCC 25391 / DSM 10237 / CIP 104748 / NCIMB 11846 / Nb-255).